The following is a 198-amino-acid chain: UPF0301 protein Tfu_2389 (198 aa).

Belongs to the UPF0301 (AlgH) family.

The protein is UPF0301 protein Tfu_2389 of Thermobifida fusca (strain YX).